We begin with the raw amino-acid sequence, 118 residues long: Large ribosomal subunit protein bL20 (118 aa).

This sequence belongs to the bacterial ribosomal protein bL20 family.

In terms of biological role, binds directly to 23S ribosomal RNA and is necessary for the in vitro assembly process of the 50S ribosomal subunit. It is not involved in the protein synthesizing functions of that subunit. The chain is Large ribosomal subunit protein bL20 from Desulfotalea psychrophila (strain LSv54 / DSM 12343).